The chain runs to 62 residues: MEGIAKITLILLFLFVTMHTFANWNTEAAVCVYRTCDKDCKRRGYRSGKCINNACKCYPYGK.

The first 22 residues, 1–22 (MEGIAKITLILLFLFVTMHTFA), serve as a signal peptide directing secretion. The propeptide occupies 23–28 (NWNTEA). 3 disulfides stabilise this stretch: C31-C50, C36-C55, and C40-C57. Position 60 is a tyrosine amide (Y60).

This sequence belongs to the short scorpion toxin superfamily. Potassium channel inhibitor family. Alpha-KTx 10 subfamily. In terms of tissue distribution, expressed by the venom gland.

It is found in the secreted. Blocks Shaker B (Sh) and voltage-gated potassium-channels Kv1.1/KCNA1, Kv1.2/KCNA2, Kv1.3/KCNA3. Also inhibits small conductance calcium-activated potassium channels (KCNN) and intermediate conductance calcium-activated potassium channel (KCa3.1/KCNN4). In Centruroides noxius (Mexican scorpion), this protein is Potassium channel toxin alpha-KTx 10.1.